The following is a 1394-amino-acid chain: Adhesion and penetration protein autotransporter (1394 aa).

A signal peptide spans 1 to 25 (MKKTVFRLNFLTACISLGIVSQAWA). The region spanning 26-286 (GHTYFGIDYQ…QLVRKSYFDE (261 aa)) is the Peptidase S6 domain. Ser243 is an active-site residue. 2 disordered regions span residues 848–870 (AYSASSNNTPRRRSLETETTPTS) and 995–1027 (TLEAKQVEPTAKTQTGEPKVRSRRAARAAFPDT). The Autotransporter domain maps to 1140–1394 (VDQAQSAVWT…NVGVKLGYRW (255 aa)).

The protein localises to the periplasm. It is found in the secreted. It localises to the cell surface. Its subcellular location is the cell outer membrane. Its function is as follows. Probable protease; promotes adherence and invasion by directly binding to a host cell structure. In Haemophilus influenzae, this protein is Adhesion and penetration protein autotransporter (hap).